The chain runs to 340 residues: Sesquiterpene synthase 6 (340 aa).

Mg(2+) contacts are provided by aspartate 90, asparagine 229, serine 233, and glutamate 237. Positions 90–94 (DDITD) match the DDXXD motif motif. The NSE/DTE motif signature appears at 229-237 (NDIYSFNNE). Arginine 316 and tyrosine 317 together coordinate (2E,6E)-farnesyl diphosphate.

The protein belongs to the terpene synthase family. Requires Mg(2+) as cofactor.

It carries out the reaction (2E,6E)-farnesyl diphosphate = delta-cadinene + diphosphate. The enzyme catalyses (2E,6E)-farnesyl diphosphate = bicyclogermacrene + diphosphate. Functionally, terpene cyclase that catalyzes the cyclization of farnesyl diphosphate (FPP) to various sesquiterpenes, including bicycloelemene, alpha-gurjunene, 9-epi-caryophylene, bicyclosesquiphellandrene, bicyclogermacrene and delta-cadinene. The sequence is that of Sesquiterpene synthase 6 from Postia placenta (strain ATCC 44394 / Madison 698-R) (Brown rot fungus).